Here is a 209-residue protein sequence, read N- to C-terminus: Holliday junction branch migration complex subunit RuvA (209 aa).

A domain I region spans residues 1–64 (MIGKLKGLVD…EDSIKLYGFA (64 aa)). Residues 65–143 (SETEREWFRL…ALGASLHTLA (79 aa)) form a domain II region. Positions 144-154 (GAGSEGAGVEA) are flexible linker. The interval 155 to 209 (PASGAVSDAISVLVNLGFGRSQAAVAVAASSKALGSGAGAGDLAKRALQELAQSG) is domain III.

Belongs to the RuvA family. In terms of assembly, homotetramer. Forms an RuvA(8)-RuvB(12)-Holliday junction (HJ) complex. HJ DNA is sandwiched between 2 RuvA tetramers; dsDNA enters through RuvA and exits via RuvB. An RuvB hexamer assembles on each DNA strand where it exits the tetramer. Each RuvB hexamer is contacted by two RuvA subunits (via domain III) on 2 adjacent RuvB subunits; this complex drives branch migration. In the full resolvosome a probable DNA-RuvA(4)-RuvB(12)-RuvC(2) complex forms which resolves the HJ.

It localises to the cytoplasm. Its function is as follows. The RuvA-RuvB-RuvC complex processes Holliday junction (HJ) DNA during genetic recombination and DNA repair, while the RuvA-RuvB complex plays an important role in the rescue of blocked DNA replication forks via replication fork reversal (RFR). RuvA specifically binds to HJ cruciform DNA, conferring on it an open structure. The RuvB hexamer acts as an ATP-dependent pump, pulling dsDNA into and through the RuvAB complex. HJ branch migration allows RuvC to scan DNA until it finds its consensus sequence, where it cleaves and resolves the cruciform DNA. The chain is Holliday junction branch migration complex subunit RuvA from Methylocella silvestris (strain DSM 15510 / CIP 108128 / LMG 27833 / NCIMB 13906 / BL2).